The sequence spans 189 residues: GMP synthase [glutamine-hydrolyzing] subunit A (189 aa).

In terms of domain architecture, Glutamine amidotransferase type-1 spans 1–189 (MIVILNNGGQ…CKKCGFEFEE (189 aa)). Residue C76 is the Nucleophile of the active site. Catalysis depends on residues H163 and E165.

Heterodimer composed of a glutamine amidotransferase subunit (A) and a GMP-binding subunit (B).

The catalysed reaction is XMP + L-glutamine + ATP + H2O = GMP + L-glutamate + AMP + diphosphate + 2 H(+). The protein operates within purine metabolism; GMP biosynthesis; GMP from XMP (L-Gln route): step 1/1. Its function is as follows. Catalyzes the synthesis of GMP from XMP. This chain is GMP synthase [glutamine-hydrolyzing] subunit A, found in Methanococcus maripaludis (strain C5 / ATCC BAA-1333).